A 476-amino-acid chain; its full sequence is Bifunctional protein HldE (476 aa).

The segment at 1–318 (MKVTLPEFER…ENAVRGRADT (318 aa)) is ribokinase. Residue 195-198 (NLSE) participates in ATP binding. D264 is a catalytic residue. A cytidylyltransferase region spans residues 344–476 (MTNGVFDILH…IIKKIQKDSQ (133 aa)).

In the N-terminal section; belongs to the carbohydrate kinase PfkB family. The protein in the C-terminal section; belongs to the cytidylyltransferase family. As to quaternary structure, homodimer.

It catalyses the reaction D-glycero-beta-D-manno-heptose 7-phosphate + ATP = D-glycero-beta-D-manno-heptose 1,7-bisphosphate + ADP + H(+). It carries out the reaction D-glycero-beta-D-manno-heptose 1-phosphate + ATP + H(+) = ADP-D-glycero-beta-D-manno-heptose + diphosphate. The protein operates within nucleotide-sugar biosynthesis; ADP-L-glycero-beta-D-manno-heptose biosynthesis; ADP-L-glycero-beta-D-manno-heptose from D-glycero-beta-D-manno-heptose 7-phosphate: step 1/4. Its pathway is nucleotide-sugar biosynthesis; ADP-L-glycero-beta-D-manno-heptose biosynthesis; ADP-L-glycero-beta-D-manno-heptose from D-glycero-beta-D-manno-heptose 7-phosphate: step 3/4. Catalyzes the phosphorylation of D-glycero-D-manno-heptose 7-phosphate at the C-1 position to selectively form D-glycero-beta-D-manno-heptose-1,7-bisphosphate. Its function is as follows. Catalyzes the ADP transfer from ATP to D-glycero-beta-D-manno-heptose 1-phosphate, yielding ADP-D-glycero-beta-D-manno-heptose. In Enterobacter sp. (strain 638), this protein is Bifunctional protein HldE.